The chain runs to 1266 residues: Rho GTPase-activating protein 29 (1266 aa).

4 positions are modified to phosphoserine: S171, S176, S179, and S190. The F-BAR domain maps to 192–462 (IELDNLLLKN…SAKLYDPGQE (271 aa)). Residues 296 to 418 (RKNEMEKQRK…EILTQLRTLV (123 aa)) are a coiled coil. Residues 482–501 (NVNKQMTNSPQTSGYEPADS) form a disordered region. Polar residues predominate over residues 483-495 (VNKQMTNSPQTSG). Phosphoserine occurs at positions 501, 521, and 554. Residues 542–561 (DSESTGGSSESRSLDSESIS) are compositionally biased toward low complexity. The disordered stretch occupies residues 542–601 (DSESTGGSSESRSLDSESISPGDFHRKLPRTPSSGTMSSADDLDEREPPSPSEAGPNSLG). The segment at 614–659 (THKFRKLRSPTKCRDCDGIVMFPGVECEECLLVCHRKCLENLVIIC) adopts a Phorbol-ester/DAG-type zinc-finger fold. Residues 673 to 888 (AEFIQVAKKE…FLITYSQKIF (216 aa)) enclose the Rho-GAP domain. Phosphoserine is present on residues S920, S956, and S1028. Disordered stretches follow at residues 1039 to 1081 (SSPT…KVNG), 1116 to 1157 (GLTV…ATAV), and 1209 to 1266 (KSDP…PQFV). Residues 1072-1081 (SNTTRSKVNG) are compositionally biased toward polar residues. Over residues 1124-1136 (NRDHPGSKAHAEP) the composition is skewed to basic and acidic residues. A phosphoserine mark is found at S1149 and S1151. Acidic residues predominate over residues 1256 to 1266 (EDLEDEIPQFV). Residues 1263–1266 (PQFV) form an interaction with PTPN13/PTPL1 region.

In terms of assembly, interacts with PTPN13/PTPL1. Interacts with RAP2A via its coiled coil domain. Interacts with RASIP1.

In terms of biological role, GTPase activator for the Rho-type GTPases by converting them to an inactive GDP-bound state. Has strong activity toward RHOA, and weaker activity toward RAC1 and CDC42. May act as a specific effector of RAP2A to regulate Rho. In concert with RASIP1, suppresses RhoA signaling and dampens ROCK and MYH9 activities in endothelial cells and plays an essential role in blood vessel tubulogenesis. The sequence is that of Rho GTPase-activating protein 29 (Arhgap29) from Mus musculus (Mouse).